Here is a 109-residue protein sequence, read N- to C-terminus: Urease subunit gamma (109 aa).

This sequence belongs to the urease gamma subunit family. As to quaternary structure, heterotrimer of UreA (gamma), UreB (beta) and UreC (alpha) subunits. Three heterotrimers associate to form the active enzyme.

It is found in the cytoplasm. The enzyme catalyses urea + 2 H2O + H(+) = hydrogencarbonate + 2 NH4(+). It functions in the pathway nitrogen metabolism; urea degradation; CO(2) and NH(3) from urea (urease route): step 1/1. The polypeptide is Urease subunit gamma (Natronomonas pharaonis (strain ATCC 35678 / DSM 2160 / CIP 103997 / JCM 8858 / NBRC 14720 / NCIMB 2260 / Gabara) (Halobacterium pharaonis)).